A 236-amino-acid polypeptide reads, in one-letter code: Leucyl/phenylalanyl-tRNA--protein transferase (236 aa).

This sequence belongs to the L/F-transferase family.

It localises to the cytoplasm. The enzyme catalyses N-terminal L-lysyl-[protein] + L-leucyl-tRNA(Leu) = N-terminal L-leucyl-L-lysyl-[protein] + tRNA(Leu) + H(+). It catalyses the reaction N-terminal L-arginyl-[protein] + L-leucyl-tRNA(Leu) = N-terminal L-leucyl-L-arginyl-[protein] + tRNA(Leu) + H(+). It carries out the reaction L-phenylalanyl-tRNA(Phe) + an N-terminal L-alpha-aminoacyl-[protein] = an N-terminal L-phenylalanyl-L-alpha-aminoacyl-[protein] + tRNA(Phe). Functionally, functions in the N-end rule pathway of protein degradation where it conjugates Leu, Phe and, less efficiently, Met from aminoacyl-tRNAs to the N-termini of proteins containing an N-terminal arginine or lysine. The chain is Leucyl/phenylalanyl-tRNA--protein transferase from Shewanella putrefaciens (strain CN-32 / ATCC BAA-453).